Reading from the N-terminus, the 348-residue chain is Eukaryotic translation initiation factor 3 subunit H (348 aa).

Residues 1–25 (MASRKEGSGAAGGGFGASKGKGKAA) form a disordered region. Over residues 9-19 (GAAGGGFGASK) the composition is skewed to gly residues. The MPN domain occupies 35 to 169 (VQIDGLVVLK…LKAYRLTPKL (135 aa)). Residues 266 to 285 (QQQQKHQYQQRRQQENLQRQ) show a composition bias toward low complexity. Positions 266–304 (QQQQKHQYQQRRQQENLQRQSRGEAPLPEEDINKLFKPP) are disordered.

This sequence belongs to the eIF-3 subunit H family. Component of the eukaryotic translation initiation factor 3 (eIF-3) complex, which is composed of 13 subunits: EIF3A, EIF3B, EIF3C, EIF3D, EIF3E, EIF3F, EIF3G, EIF3H, EIF3I, EIF3J, EIF3K, EIF3L and EIF3M.

Its subcellular location is the cytoplasm. Its function is as follows. Component of the eukaryotic translation initiation factor 3 (eIF-3) complex, which is involved in protein synthesis of a specialized repertoire of mRNAs and, together with other initiation factors, stimulates binding of mRNA and methionyl-tRNAi to the 40S ribosome. The eIF-3 complex specifically targets and initiates translation of a subset of mRNAs involved in cell proliferation. This Gallus gallus (Chicken) protein is Eukaryotic translation initiation factor 3 subunit H.